Consider the following 1072-residue polypeptide: Integrator complex subunit 3 homolog (1072 aa).

2 disordered regions span residues 920 to 941 (YPSS…STSI) and 1002 to 1072 (DTTV…NDSD). Phosphoserine occurs at positions 1042, 1043, 1047, and 1048.

The protein belongs to the Integrator subunit 3 family. As to quaternary structure, belongs to the multiprotein complex Integrator, at least composed of IntS1, IntS2, IntS3, IntS4, omd/IntS5, IntS6, defl/IntS7, IntS8, IntS9, IntS10, IntS11, IntS12, asun/IntS13, IntS14 and IntS15. The core complex associates with protein phosphatase 2A subunits mts/PP2A and Pp2A-29B, to form the Integrator-PP2A (INTAC) complex.

The protein localises to the nucleus. The protein resides in the cytoplasm. Functionally, component of the integrator complex, a multiprotein complex that terminates RNA polymerase II (Pol II) transcription in the promoter-proximal region of genes. The integrator complex provides a quality checkpoint during transcription elongation by driving premature transcription termination of transcripts that are unfavorably configured for transcriptional elongation: the complex terminates transcription by (1) catalyzing dephosphorylation of the C-terminal domain (CTD) of Pol II subunit Polr2A/Rbp1 and Spt5, and (2) degrading the exiting nascent RNA transcript via endonuclease activity. The integrator complex is also involved in the 3'-end processing of the U7 snRNA, and also the spliceosomal snRNAs U1, U2, U4 and U5. This Drosophila erecta (Fruit fly) protein is Integrator complex subunit 3 homolog (IntS3).